The sequence spans 466 residues: Uridine kinase-like protein 3 (466 aa).

A uridine kinase region spans residues 41–246; sequence HGQPFVIGVA…IVQHIHTKLG (206 aa). The segment at 256-466 is uracil phosphoribosyltransferase; sequence NLYVIQSTFQ…GDRYFGTDDE (211 aa). GTP is bound by residues K280, R289, and 323–326; that span reads CKKL. 2 residues coordinate 5-phospho-alpha-D-ribose 1-diphosphate: R333 and R358. Position 378 (R378) interacts with GTP. 5-phospho-alpha-D-ribose 1-diphosphate-binding positions include D384, 389 to 392, and E455; that span reads TGNS. 454–456 contributes to the uracil binding site; the sequence is GEF.

It in the N-terminal section; belongs to the uridine kinase family. In the C-terminal section; belongs to the UPRTase family. The cofactor is Mg(2+).

It catalyses the reaction UMP + diphosphate = 5-phospho-alpha-D-ribose 1-diphosphate + uracil. The enzyme catalyses cytidine + ATP = CMP + ADP + H(+). The catalysed reaction is uridine + ATP = UMP + ADP + H(+). It functions in the pathway pyrimidine metabolism; UMP biosynthesis via salvage pathway; UMP from uracil: step 1/1. The protein operates within pyrimidine metabolism; CTP biosynthesis via salvage pathway; CTP from cytidine: step 1/3. It participates in pyrimidine metabolism; UMP biosynthesis via salvage pathway; UMP from uridine: step 1/1. Allosterically activated by GTP. In terms of biological role, involved in the pyrimidine salvage pathway. The uracil phosphoribosyltransferase (UPRT) activity, that catalyzes the conversion of uracil and 5-phospho-alpha-D-ribose 1-diphosphate (PRPP) to UMP and diphosphate, is unsure. This is Uridine kinase-like protein 3 (UKL3) from Arabidopsis thaliana (Mouse-ear cress).